Consider the following 207-residue polypeptide: Phosphatidylinositol phosphate synthase (207 aa).

Helical transmembrane passes span 21-44 (LRAHVTPDVVTWIGTIGAVLMALI) and 50-67 (WLWQGPWLVTLFIFSDSL). 28 to 31 (DVVT) contacts a CDP-1,2-diacyl-sn-glycerol. Residues aspartate 65 and aspartate 68 each contribute to the Mg(2+) site. Residues glycine 69, arginine 73, and serine 79 each contribute to the a CDP-1,2-diacyl-sn-glycerol site. Mg(2+)-binding residues include aspartate 86 and aspartate 90. Helical transmembrane passes span 88–106 (TLDRFGDAAIFTGVALYFA), 112–131 (VLWTAMACAALVFGMATSYV), 152–170 (RLLVSLVAIEITGLARVGA), and 176–195 (VVALPIALCYLTLAGAITVV). The active-site Proton acceptor is aspartate 90.

It belongs to the CDP-alcohol phosphatidyltransferase class-I family. As to quaternary structure, homodimer. Mg(2+) is required as a cofactor.

It localises to the cell membrane. It catalyses the reaction a CDP-1,2-diacyl-sn-glycerol + 1D-myo-inositol 3-phosphate = a 1,2-diacyl-sn-glycero-3-phospho-(1D-myo-inositol-3-phosphate) + CMP + H(+). It carries out the reaction 1,2-di-(9Z-octadecenoyl)-sn-glycero-3-cytidine-5'-diphosphate + 1D-myo-inositol 3-phosphate = 1,2-di-(9Z-octadecenoyl)-sn-glycero-3-phospho-(1D-myo-inositol-3-phosphate) + CMP + H(+). Its pathway is phospholipid metabolism; phosphatidylinositol phosphate biosynthesis. In terms of biological role, catalyzes the conjugation of the 1'-hydroxyl group of D-myo-inositol-3-phosphate (also named L-myo-inositol-1-phosphate) with a lipid tail of cytidine diphosphate diacylglycerol (CDP-DAG), forming phosphatidylinositol phosphate (PIP) and CMP. PIP is a precursor of phosphatidylinositol (PI) which is an essential lipid required for cell wall formation. This chain is Phosphatidylinositol phosphate synthase, found in Cutibacterium acnes (strain DSM 16379 / KPA171202) (Propionibacterium acnes).